The primary structure comprises 228 residues: Endolytic peptidoglycan transglycosylase RlpA (228 aa).

Positions 1–23 (MIQRHKLIVLIFLLIFCLSGCNT) are cleaved as a signal peptide.

Belongs to the RlpA family.

Functionally, lytic transglycosylase with a strong preference for naked glycan strands that lack stem peptides. This chain is Endolytic peptidoglycan transglycosylase RlpA, found in Rickettsia felis (strain ATCC VR-1525 / URRWXCal2) (Rickettsia azadi).